The sequence spans 62 residues: Large ribosomal subunit protein bL28 (62 aa).

A disordered region spans residues 1 to 27 (MAKECVITGRKSRSGNKRSHAMNSSKR). A compositionally biased stretch (basic residues) spans 10–20 (RKSRSGNKRSH).

Belongs to the bacterial ribosomal protein bL28 family.

This Listeria innocua serovar 6a (strain ATCC BAA-680 / CLIP 11262) protein is Large ribosomal subunit protein bL28.